We begin with the raw amino-acid sequence, 69 residues long: Amphipathic peptide OcyC2 (69 aa).

Residues 1 to 23 form the signal peptide; that stretch reads MKTQFAILMIAVVLMQMLVQTEG. The residue at position 37 (Ile37) is an Isoleucine amide. The propeptide occupies 41–69; the sequence is GLKKLDQLDDTFDSDLSDADVKLLREMFK.

Belongs to the non-disulfide-bridged peptide (NDBP) superfamily. Short antimicrobial peptide (group 4) family. Expressed by the venom gland.

The protein localises to the secreted. It is found in the target cell membrane. Its function is as follows. Amphipathic peptide with antimicrobial activity. Shows antifungal activity with MIC values ranging from 25 to 200 uM. Does not show antifungal activity against Candida glabrata (ATCC90030) and Candida parapsilosis (ATCC22019) (MIC&gt;400 uM). This Opisthacanthus cayaporum (South American scorpion) protein is Amphipathic peptide OcyC2.